The primary structure comprises 658 residues: Endoplasmic reticulum mannosyl-oligosaccharide 1,2-alpha-mannosidase (658 aa).

Topologically, residues 1 to 50 are cytoplasmic; the sequence is MYPPPAPPPAPHRDFISVTLSLGESYDNSKSRRRRSCWRKWKQLSRLQRN. Residues 51 to 71 form a helical; Signal-anchor for type II membrane protein membrane-spanning segment; sequence VILFVLGFLILCGFLYSLHTA. Residues 72-658 are Lumenal-facing; sequence DQWKALSGRP…AHPLPIWAPA (587 aa). Phosphoserine is present on serine 102. The segment at 123-142 is disordered; that stretch reads GPPHLQIRPPNTVSKDGMQD. Glutamate 289 functions as the Proton donor in the catalytic mechanism. Residue aspartate 422 is part of the active site. A disulfide bridge connects residues cysteine 486 and cysteine 515. Glutamate 529 (proton donor) is an active-site residue. Glutamate 558 is an active-site residue. Threonine 647 serves as a coordination point for Ca(2+).

This sequence belongs to the glycosyl hydrolase 47 family. Ca(2+) serves as cofactor.

It localises to the endoplasmic reticulum membrane. The enzyme catalyses N(4)-(alpha-D-Man-(1-&gt;2)-alpha-D-Man-(1-&gt;2)-alpha-D-Man-(1-&gt;3)-[alpha-D-Man-(1-&gt;2)-alpha-D-Man-(1-&gt;3)-[alpha-D-Man-(1-&gt;2)-alpha-D-Man-(1-&gt;6)]-alpha-D-Man-(1-&gt;6)]-beta-D-Man-(1-&gt;4)-beta-D-GlcNAc-(1-&gt;4)-beta-D-GlcNAc)-L-asparaginyl-[protein] (N-glucan mannose isomer 9A1,2,3B1,2,3) + 4 H2O = N(4)-(alpha-D-Man-(1-&gt;3)-[alpha-D-Man-(1-&gt;3)-[alpha-D-Man-(1-&gt;6)]-alpha-D-Man-(1-&gt;6)]-beta-D-Man-(1-&gt;4)-beta-D-GlcNAc-(1-&gt;4)-beta-D-GlcNAc)-L-asparaginyl-[protein] (N-glucan mannose isomer 5A1,2) + 4 beta-D-mannose. It carries out the reaction N(4)-(alpha-D-Man-(1-&gt;2)-alpha-D-Man-(1-&gt;2)-alpha-D-Man-(1-&gt;3)-[alpha-D-Man-(1-&gt;3)-[alpha-D-Man-(1-&gt;2)-alpha-D-Man-(1-&gt;6)]-alpha-D-Man-(1-&gt;6)]-beta-D-Man-(1-&gt;4)-beta-D-GlcNAc-(1-&gt;4)-beta-D-GlcNAc)-L-asparaginyl-[protein] (N-glucan mannose isomer 8A1,2,3B1,3) + 3 H2O = N(4)-(alpha-D-Man-(1-&gt;3)-[alpha-D-Man-(1-&gt;3)-[alpha-D-Man-(1-&gt;6)]-alpha-D-Man-(1-&gt;6)]-beta-D-Man-(1-&gt;4)-beta-D-GlcNAc-(1-&gt;4)-beta-D-GlcNAc)-L-asparaginyl-[protein] (N-glucan mannose isomer 5A1,2) + 3 beta-D-mannose. The protein operates within protein modification; protein glycosylation. Functionally, involved in glycoprotein quality control targeting of misfolded glycoproteins for degradation. It primarily trims a single alpha-1,2-linked mannose residue from Man(9)GlcNAc(2) to produce Man(8)GlcNAc(2), but at high enzyme concentrations, as found in the ER quality control compartment (ERQC), it further trims the carbohydrates to Man(5-6)GlcNAc(2). This Mus musculus (Mouse) protein is Endoplasmic reticulum mannosyl-oligosaccharide 1,2-alpha-mannosidase (Man1b1).